The sequence spans 141 residues: Transmembrane protein 216 (141 aa).

Helical transmembrane passes span 15-35 (VLFFLNGWYYATYFLLELLIF), 49-69 (LVLDVVMLLLYLGIEVIRLFF), 82-102 (LGISVALTFPSAMMASYYLLL), and 115-135 (SILLFFCGSELLLEMLTLATF).

In terms of assembly, part of the tectonic-like complex (also named B9 complex). Interacts with TMEM107.

It is found in the membrane. Its subcellular location is the cytoplasm. The protein resides in the cytoskeleton. The protein localises to the cilium basal body. In terms of biological role, part of the tectonic-like complex which is required for tissue-specific ciliogenesis and may regulate ciliary membrane composition. The sequence is that of Transmembrane protein 216 (Tmem216) from Mus musculus (Mouse).